The chain runs to 793 residues: Pleckstrin homology domain-containing family H member 3 (793 aa).

Positions 1–18 (MPLPGGLWWLLCCRRGFT) are cleaved as a signal peptide. Residues 28–62 (ELSGDGDEDEDEETFELRTPSPAGGGRGPLEVTLT) are disordered. The span at 29–41 (LSGDGDEDEDEET) shows a compositional bias: acidic residues. Ser30 carries the phosphoserine modification. The region spanning 95–199 (DIVVKGWLYR…WGVALREVIA (105 aa)) is the PH domain. The 163-residue stretch at 237 to 399 (HTSGALYAPL…PSLAEISALS (163 aa)) folds into the MyTH4 domain. The region spanning 404–754 (LLCTVHCPGA…AYLANPSPER (351 aa)) is the FERM domain. Disordered regions lie at residues 554–586 (VPLP…SAAL) and 598–622 (KRRA…EGGG). Residues 598–608 (KRRAERARRGG) show a composition bias toward basic residues. Omega-N-methylarginine is present on residues Arg638 and Arg642. A compositionally biased stretch (low complexity) spans 750 to 762 (PSPERPCSSSSPP). The interval 750–793 (PSPERPCSSSSPPCQDLPDTSPPSQRPGLDEPQGQSGCLGQLQD) is disordered. Over residues 782-793 (QGQSGCLGQLQD) the composition is skewed to polar residues.

In Homo sapiens (Human), this protein is Pleckstrin homology domain-containing family H member 3 (PLEKHH3).